The chain runs to 2620 residues: Ubiquitin carboxyl-terminal hydrolase 24 (2620 aa).

One can recognise a UBA domain in the interval 3 to 44 (SEEEQHMTTLLCMGFSDPATIRKALRLAKNDINEAVALLTNE). Residues 45–102 (RPGLDYGGYEPMDSGGGPSPGPGGGPRGDGGGDGGGGGPSRGGSTGGGGGFDPPPAYH) form a disordered region. Residues 58–95 (SGGGPSPGPGGGPRGDGGGDGGGGGPSRGGSTGGGGGF) are compositionally biased toward gly residues. Ser63 and Ser88 each carry phosphoserine. Tyr942 carries the phosphotyrosine modification. 2 disordered regions span residues 1034-1054 (TSGS…SSSS) and 1129-1151 (TLLS…QQHQ). Residues 1131-1151 (LSESSSQSSKSPSLSSKQQHQ) are compositionally biased toward low complexity. Phosphoserine occurs at positions 1141 and 1285. The USP domain occupies 1689–2042 (VGLRNGGATC…NAYMLFYQRV (354 aa)). The active-site Nucleophile is Cys1698. The segment at 1921–1945 (ARQDSSSEVGENGRSVDQGGGGSPR) is disordered. Ser1943 bears the Phosphoserine mark. Catalysis depends on His1970, which acts as the Proton acceptor. Residues Ser2047, Ser2077, and Ser2561 each carry the phosphoserine modification. Positions 2063–2090 (AEDLSLSAPSSPEISPQSSPRPHRPNND) are disordered. Positions 2069–2082 (SAPSSPEISPQSSP) are enriched in low complexity. Thr2565 is modified (phosphothreonine). A disordered region spans residues 2575-2620 (EKEQSGSSNGSESSPANENGDRHLQQGSESPMMIGELRSDLDDVDP). Low complexity predominate over residues 2579–2592 (SGSSNGSESSPANE). Residue Ser2604 is modified to Phosphoserine. Basic and acidic residues predominate over residues 2611–2620 (LRSDLDDVDP).

Belongs to the peptidase C19 family. In terms of assembly, (Microbial infection) Interacts with human cytomegalovirus protein UL38.

The catalysed reaction is Thiol-dependent hydrolysis of ester, thioester, amide, peptide and isopeptide bonds formed by the C-terminal Gly of ubiquitin (a 76-residue protein attached to proteins as an intracellular targeting signal).. Its function is as follows. Ubiquitin-specific protease that regulates cell survival in various contexts through modulating the protein stability of some of its substrates including DDB2, MCL1 or TP53. Plays a positive role on ferritinophagy where ferritin is degraded in lysosomes and releases free iron. This Homo sapiens (Human) protein is Ubiquitin carboxyl-terminal hydrolase 24 (USP24).